A 155-amino-acid polypeptide reads, in one-letter code: SsrA-binding protein (155 aa).

Belongs to the SmpB family.

It is found in the cytoplasm. Functionally, required for rescue of stalled ribosomes mediated by trans-translation. Binds to transfer-messenger RNA (tmRNA), required for stable association of tmRNA with ribosomes. tmRNA and SmpB together mimic tRNA shape, replacing the anticodon stem-loop with SmpB. tmRNA is encoded by the ssrA gene; the 2 termini fold to resemble tRNA(Ala) and it encodes a 'tag peptide', a short internal open reading frame. During trans-translation Ala-aminoacylated tmRNA acts like a tRNA, entering the A-site of stalled ribosomes, displacing the stalled mRNA. The ribosome then switches to translate the ORF on the tmRNA; the nascent peptide is terminated with the 'tag peptide' encoded by the tmRNA and targeted for degradation. The ribosome is freed to recommence translation, which seems to be the essential function of trans-translation. The chain is SsrA-binding protein from Oenococcus oeni (strain ATCC BAA-331 / PSU-1).